The sequence spans 443 residues: Cyclic GMP-AMP synthase (443 aa).

S61 provides a ligand contact to ATP. Catalysis depends on residues D78 and D80. Position 80 (D80) interacts with Mg(2+). N124 is a binding site for ATP. D138 is an active-site residue. Mg(2+) is bound at residue D138. L208 is a binding site for ATP.

The protein belongs to the CD-NTase family. B06 subfamily. Mg(2+) serves as cofactor.

The catalysed reaction is GTP + ATP = 3',3'-cGAMP + 2 diphosphate. The enzyme catalyses UTP + ATP = 3',3'-cUAMP + 2 diphosphate. It catalyses the reaction 2 ATP = 3',3'-c-di-AMP + 2 diphosphate. It carries out the reaction 2 GTP = 3',3'-c-di-GMP + 2 diphosphate. The catalysed reaction is UTP + GTP = 3',3'-cGMP-UMP + 2 diphosphate. Cyclic nucleotide synthase (second messenger synthase) of a CBASS antivirus system. CBASS (cyclic oligonucleotide-based antiphage signaling system) provides immunity against bacteriophages. The CD-NTase protein (CdnB, this protein) synthesizes cyclic nucleotides in response to infection; these serve as specific second messenger signals. The signals activate a diverse range of effectors, leading to bacterial cell death and thus abortive phage infection. The effector protein for this system is membrane protein Cap15. Its function is as follows. Catalyzes the synthesis of 3',3'-cyclic GMP-AMP (3'3'-cGAMP) from GTP and ATP, a second messenger in cell signal transduction. Also makes cyclic UMP-AMP, cyclic UMP-GMP, cyclic di-AMP and cyclic-di-GMP. Functionally, protects E.coli against phage infection. When the CBASS operon (cdnB-cap15) is introduced in E.coli MG1655 there is about 100-fold protection against phage T2 and about 10-fold protection against phage T5 and T6. The chain is Cyclic GMP-AMP synthase from Escherichia albertii.